A 325-amino-acid polypeptide reads, in one-letter code: Cell wall mannoprotein PIR3 (325 aa).

A signal peptide spans 1-18 (MQYKKPLVVSALAATSLA). A propeptide spanning residues 19-67 (AYAPKDPWSTLTPSATYKGGITDYSSSFGIAIEAVATSASSVASSKAKR) is cleaved from the precursor. PIR1/2/3 repeat units follow at residues 68–91 (AASQ…KKST), 92–109 (AAAV…AKST), 110–127 (AAAV…AKST), 128–145 (AAAV…AKST), 146–163 (AAAV…AKST), 164–181 (AAAA…TTST), 182–199 (KAAA…SKTT), and 200–217 (SGAS…AEVK).

It belongs to the PIR protein family. Covalently linked to beta-1,3-glucan of the inner cell wall layer via an alkali-sensitive ester linkage between the gamma-carboxyl group of glutamic acids, arising from specific glutamines within the PIR1/2/3 repeats, and hydroxyl groups of glucoses of beta-1,3-glucan chains. In terms of processing, O-glycosylated. Extensively O-mannosylated.

It is found in the secreted. The protein localises to the cell wall. Component of the outer cell wall layer. Required for stability of the cell wall and for optimal growth. Required for resistance against several antifungal and cell wall-perturbing agents. This Saccharomyces cerevisiae (strain ATCC 204508 / S288c) (Baker's yeast) protein is Cell wall mannoprotein PIR3 (PIR3).